Reading from the N-terminus, the 133-residue chain is Acyl-CoA thioesterase YbgC (133 aa).

Asp11 is an active-site residue.

It belongs to the 4-hydroxybenzoyl-CoA thioesterase family. In terms of assembly, homotetramer. May interact with CagA.

Functionally, thioesterase that may be involved in phospholipid metabolism. Displays acyl-CoA thioesterase activity with lauroyl-CoA (C12:0), myristoyl-CoA (C14:0), palmitoyl-CoA (C16:0), stearoyl-CoA (C18:0) and benzoyl-CoA, catalyzing the hydrolysis of the thioester bond. Has low activity with butyryl-CoA and octanoyl-CoA. In Helicobacter pylori (strain ATCC 700392 / 26695) (Campylobacter pylori), this protein is Acyl-CoA thioesterase YbgC (ybgC).